The following is a 5538-amino-acid chain: Leashin (5538 aa).

Positions 1-10 (MFRALMGGGR) are enriched in gly residues. Disordered regions lie at residues 1–270 (MFRA…SSMG), 286–315 (EVDPAPGRPDRPTAGTTSEPPKPSNTTFGI), 331–365 (LPLPASPTSPPEPVPTTAPYAPPVTSSTTKPPHTH), 510–555 (SRDA…KKSS), 596–712 (TESV…DISQ), 800–901 (AATS…FPTG), 913–944 (ALASTQDRDSRLPRQHASSSSGSLQHVAPVPT), 1027–1145 (NRPH…KDSF), 1164–1297 (VLSG…GYRD), 1310–1398 (PTPP…RYVS), 1432–1993 (EDPT…TSVE), 2067–2146 (SELL…VNAF), 2165–2207 (NRLS…SPPA), 2233–3065 (PEAA…SQPI), 3077–3894 (MAEE…EIVS), 3910–4034 (EEKA…DTGL), 4072–4128 (KFKQ…EEPL), 4238–4421 (EAAL…SNQA), 4442–4463 (PRPLEVEPAASEVYQGATDEND), 4509–4698 (LRRQ…TSNT), 4733–4850 (KTDG…VEQA), and 4910–5052 (ALTV…RHRR). The segment at 1–1100 (MFRALMGGGR…RASGVQLIDR (1100 aa)) is woronin bodies-binding region. Over residues 14 to 23 (SRSTTSSSKS) the composition is skewed to low complexity. Basic and acidic residues-rich tracts occupy residues 42–51 (SRGDDRDRGL) and 89–167 (VEHD…ERSR). Positions 299–313 (AGTTSEPPKPSNTTF) are enriched in polar residues. Residues 334–352 (PASPTSPPEPVPTTAPYAP) are compositionally biased toward pro residues. Residues 514 to 523 (PRKHHYRQRR) show a composition bias toward basic residues. The segment covering 598-607 (SVSTARRSQT) has biased composition (polar residues). Over residues 639 to 655 (HRSRSRSHSSSRNRRHS) the composition is skewed to basic residues. Residues 660 to 674 (AAVGAAVGSGAIALA) are compositionally biased toward low complexity. Over residues 682 to 698 (SRSRSRSRFPRKSKGRK) the composition is skewed to basic residues. A compositionally biased stretch (basic and acidic residues) spans 809–825 (RAGEILVAKETRSRHSD). Composition is skewed to low complexity over residues 842–851 (GDQSSSSVSS) and 862–880 (GSDESQSSDSGTSKWGWRW). Positions 881–891 (GSKKNKKKKRA) are enriched in basic residues. 8 stretches are compositionally biased toward basic and acidic residues: residues 1068–1091 (LTKEQADKERRMDRLEQLKRDAER), 1098–1145 (IDRD…KDSF), 1178–1198 (SQRRHEERRQQRRAERRRGSE), 1207–1226 (SKSERAQETTDYLPEERQPE), 1356–1365 (WGEHKTHEYE), 1375–1387 (SVDHETTREREQP), 1447–1462 (GRVEYRDPWVETESKS), and 1478–1488 (EEKAPSSRVIE). Residues 1506 to 1516 (QESSEPQTRTS) show a composition bias toward low complexity. Basic and acidic residues-rich tracts occupy residues 1521 to 1536 (VIDRLSEKQDERDGSR), 1549 to 1559 (GKERDESELRA), and 1572 to 1594 (EELRSDPKRDVDSRDDGDVDRRS). Basic residues predominate over residues 1639-1648 (KKKRRKRRSK). 3 stretches are compositionally biased toward basic and acidic residues: residues 1672 to 1686 (EKLKSMDDKDKEKKA), 1700 to 1773 (EPVD…QRRE), and 1788 to 1800 (KSGEYEKDRKLSE). Composition is skewed to low complexity over residues 1867 to 1876 (PAPRSRSRPA) and 1889 to 1898 (SQSSRRSSIL). Positions 1950-1975 (KNSREMRPLWLVERHGPGHGEHKLEE) are enriched in basic and acidic residues. Polar residues-rich tracts occupy residues 1984 to 1993 (KTSSANTSVE) and 2121 to 2130 (TPQNNVTAAS). 3 stretches are compositionally biased toward basic and acidic residues: residues 2187–2196 (DADRTHKPIA), 2269–2279 (VPRDDKRRDSV), and 2307–2320 (GENKELPSEAKNEN). The span at 2321–2331 (ANDNSQAQTEQ) shows a compositional bias: polar residues. The span at 2344–2355 (AKKKKKKNKKKR) shows a compositional bias: basic residues. Polar residues predominate over residues 2358–2370 (MDSNTQEPTTPVD). Residues 2427–2441 (DVEKAIEAPDVRKEL) show a composition bias toward basic and acidic residues. A compositionally biased stretch (low complexity) spans 2449 to 2461 (APEDTPAEPTAET). The span at 2473–2484 (KKSKKKKKKKNK) shows a compositional bias: basic residues. Polar residues predominate over residues 2494-2525 (DPASTETPEASAANSQVVAAEQVESTLETTQP). 3 stretches are compositionally biased toward basic and acidic residues: residues 2580–2590 (NQAKELPHPEE), 2647–2661 (PEDKNGEAEQADLKS), and 2677–2691 (ALDKELSEISERPAE). Residues 2719-2734 (EEPTPTAAELETPLSR) show a composition bias toward low complexity. The segment covering 2735–2747 (KNSKKNKKKNKRK) has biased composition (basic residues). Positions 2796–2812 (DENKGESRDVQAVKEET) are enriched in basic and acidic residues. Over residues 2874–2884 (KKKAKKKKNRK) the composition is skewed to basic residues. Polar residues predominate over residues 2885–2894 (TANVSESQPE). 2 stretches are compositionally biased toward basic residues: residues 3003 to 3013 (KKSKKNKKKKQ) and 3089 to 3100 (KKTKKEKKKKRQ). Basic and acidic residues predominate over residues 3145-3172 (AIEHAEAAAEHSQEQPNKDVTLHADHSP). The segment covering 3248–3268 (PAMEGGAAAEELVAVEPDVLE) has biased composition (low complexity). Residues 3293–3303 (ELVNAETTQKT) show a composition bias toward polar residues. A compositionally biased stretch (basic residues) spans 3329–3341 (SKKKDKKKKKKRQ). Residues 3347 to 3367 (DEQRSSTKEEPTAEFSSDHVP) show a composition bias toward basic and acidic residues. Composition is skewed to low complexity over residues 3397–3409 (TQTAAEPTPSSAS) and 3422–3435 (ESTQEPAAEEAQTA). The segment covering 3436-3450 (KSKKKAKKDKKKRKS) has biased composition (basic residues). Residues 3480–3495 (EGPKPGDKPTSPKDSS) are compositionally biased toward basic and acidic residues. Low complexity predominate over residues 3547–3564 (EEQAVVEETVAPPVVDEA). Composition is skewed to polar residues over residues 3565-3580 (SQLQEQKVSSETLWSE) and 3604-3613 (VSPSLENNEG). Composition is skewed to basic residues over residues 3642–3652 (KSKKNKKKKKR) and 3716–3730 (KAKKKAKKKDKKRQS). Over residues 3768–3787 (TFSQETSETISTEAKSSEPS) the composition is skewed to polar residues. The span at 3800 to 3819 (KENQSHDTEPHGGNDKDLTW) shows a compositional bias: basic and acidic residues. A compositionally biased stretch (polar residues) spans 3823–3837 (MVSSQVEQQQGTPSD). A compositionally biased stretch (basic and acidic residues) spans 3876–3893 (DRLERSGEEGTRVKKEIV). Composition is skewed to polar residues over residues 3915-3925 (ISSQGEDTIQV) and 3965-3980 (KDQFTSIEVNDPSQSK). The span at 4010–4020 (TSQDDSVDAVQ) shows a compositional bias: acidic residues. Residues 4111-4123 (ESRENKFKEKQLA) show a composition bias toward basic and acidic residues. Residues 4244-4255 (KNSKKKSKKAKK) are compositionally biased toward basic residues. Polar residues predominate over residues 4328 to 4345 (LGQTPNMDNQTDDVQSTE). Residues 4378 to 4391 (KLSKKDRRKAKKKS) show a composition bias toward basic residues. A compositionally biased stretch (basic and acidic residues) spans 4392–4406 (AKDAIEPSDEPELRN). The tract at residues 4495–5538 (AIAEFDETAI…SSTMDISNVI (1044 aa)) is septal pore-binding region. Residues 4554–4570 (TEQSAGLQAKSVSSQGA) show a composition bias toward polar residues. 2 stretches are compositionally biased toward basic and acidic residues: residues 4574 to 4591 (IQDDMQHPENRLARDQTK) and 4660 to 4673 (EESHLQSQQDEKGP). A compositionally biased stretch (low complexity) spans 4940–4954 (SSVSSVKSVQSTHSV). Residues 4966–4988 (RNTSGDLRAASQAQESHGTQPHA) are compositionally biased toward polar residues. A compositionally biased stretch (pro residues) spans 4989–4998 (TPQPPQPPPS). Residues 5050-5223 (HRRSMQHLQE…QQQIAASLHD (174 aa)) adopt a coiled-coil conformation.

As to quaternary structure, binds directly or indirectly to the Woronin body major protein hexA.

Its subcellular location is the cell septum. Functionally, acts as the tether and is essential for anchoring of Woronin bodies at the septal pore. In damaged hyphae, Woronin bodies occlude septal pores in order to separate intact from damaged compartments. The protein is Leashin of Aspergillus fumigatus (strain ATCC MYA-4609 / CBS 101355 / FGSC A1100 / Af293) (Neosartorya fumigata).